The primary structure comprises 310 residues: L-lactate dehydrogenase (310 aa).

NAD(+) is bound by residues 10-11, Asp-32, Tyr-62, and 76-77; these read MV and GV. Substrate contacts are provided by residues Gln-79, Arg-85, and 117–120; that span reads NPVD. NAD(+) is bound by residues 115–117 and Ser-140; that span reads ATN. 145-148 contacts substrate; that stretch reads DTAR. Beta-D-fructose 1,6-bisphosphate contacts are provided by residues Arg-150 and 162 to 167; that span reads QSVHAY. His-172 serves as the catalytic Proton acceptor. Tyr-218 is modified (phosphotyrosine). Substrate is bound at residue Thr-227.

The protein belongs to the LDH/MDH superfamily. LDH family. In terms of assembly, homotetramer.

It localises to the cytoplasm. The enzyme catalyses (S)-lactate + NAD(+) = pyruvate + NADH + H(+). It functions in the pathway fermentation; pyruvate fermentation to lactate; (S)-lactate from pyruvate: step 1/1. With respect to regulation, allosterically activated by fructose 1,6-bisphosphate (FBP). It binds two fructose 1,6-bisphosphate (FBP) molecules per tetramer. Its function is as follows. Catalyzes the conversion of lactate to pyruvate. The protein is L-lactate dehydrogenase of Thermus caldophilus.